Consider the following 123-residue polypeptide: Small ribosomal subunit protein uS12cz/uS12cy (123 aa).

This sequence belongs to the universal ribosomal protein uS12 family. Part of the 30S ribosomal subunit.

The protein localises to the plastid. Its subcellular location is the chloroplast. Its function is as follows. With S4 and S5 plays an important role in translational accuracy. Located at the interface of the 30S and 50S subunits. This Daucus carota (Wild carrot) protein is Small ribosomal subunit protein uS12cz/uS12cy (rps12-A).